The primary structure comprises 118 residues: T cell receptor gamma variable 8 (118 aa).

The signal sequence occupies residues 1–17; it reads MLLALALLLAFLPPASQ. An Ig-like domain is found at 18-118; that stretch reads KSSNLEGRTK…GVYYCATWDR (101 aa). Cys41 and Cys113 form a disulfide bridge.

Gamma-delta TR is a heterodimer composed of a gamma and delta chain; disulfide-linked. The gamma-delta TR is associated with the transmembrane signaling CD3 coreceptor proteins following the stoichiometry: a single gamma-delta TR heterodimer associates with one CD3D-CD3E heterodimer, one CD3G-CD3E heterodimer and one CD247 homodimer forming a stable octameric structure. Upon activation, gamma-delta TR complex associates with FCER1G to initiate intracellular signaling.

The protein resides in the cell membrane. In terms of biological role, v region of the variable domain of T cell receptor (TR) gamma chain that participates in the antigen recognition. Gamma-delta TRs recognize a variety of self and foreign non-peptide antigens frequently expressed at the epithelial boundaries between the host and external environment, including endogenous lipids presented by MH-like protein CD1D and phosphoantigens presented by butyrophilin-like molecule BTN3A1. Upon antigen recognition induces rapid, innate-like immune responses involved in pathogen clearance and tissue repair. Binding of gamma-delta TR complex to antigen triggers phosphorylation of immunoreceptor tyrosine-based activation motifs (ITAMs) in the CD3 chains by the LCK and FYN kinases, allowing the recruitment, phosphorylation, and activation of ZAP70 that facilitates phosphorylation of the scaffolding proteins LCP2 and LAT. This lead to the formation of a supramolecular signalosome that recruits the phospholipase PLCG1, resulting in calcium mobilization and ERK activation, ultimately leading to T cell expansion and differentiation into effector cells. Gamma-delta TRs are produced through somatic rearrangement of a limited repertoire of variable (V), diversity (D), and joining (J) genes. The potential diversity of gamma-delta TRs is conferred by the unique ability to rearrange (D) genes in tandem and to utilize all three reading frames. The combinatorial diversity is considerably increased by the sequence exonuclease trimming and random nucleotide (N) region additions which occur during the V-(D)-J rearrangements. This is T cell receptor gamma variable 8 from Homo sapiens (Human).